The chain runs to 425 residues: Metalloprotease AF_0655 (425 aa).

It belongs to the peptidase U62 family.

Functionally, probable metalloprotease. This is Metalloprotease AF_0655 from Archaeoglobus fulgidus (strain ATCC 49558 / DSM 4304 / JCM 9628 / NBRC 100126 / VC-16).